The sequence spans 715 residues: Polyribonucleotide nucleotidyltransferase (715 aa).

Residues D498 and D504 each contribute to the Mg(2+) site. A KH domain is found at 565 to 625 (PKVCMMQIKP…ETVKKTVAFI (61 aa)). Positions 635–706 (GTCYQASILR…DRGRIDFLLL (72 aa)) constitute an S1 motif domain.

Belongs to the polyribonucleotide nucleotidyltransferase family. Requires Mg(2+) as cofactor.

The protein localises to the cytoplasm. The catalysed reaction is RNA(n+1) + phosphate = RNA(n) + a ribonucleoside 5'-diphosphate. Functionally, involved in mRNA degradation. Catalyzes the phosphorolysis of single-stranded polyribonucleotides processively in the 3'- to 5'-direction. This is Polyribonucleotide nucleotidyltransferase from Onion yellows phytoplasma (strain OY-M).